Consider the following 289-residue polypeptide: MFGLFGLWRTFDSVVFYLTLIVGLGGPVGNGLVLWNLGFRIKKGPFSIYLLHLAAADFLFLSCRVGFSVAQAALGAQDTLYFVLTFLWFAVGLWLLAAFSVERCLSDLFPACYQGCRPRHASAVLCALVWTPTLPAVPLPANACGLLRNSACPLVCPRYHVASVTWFLVLARVAWTAGVVLFVWVTCCSTRPRPRLYGIVLGALLLLFFCGLPSVFYWSLQPLLNFLLPVFSPLATLLACVNSSSKPLIYSGLGRQPGKREPLRSVLRRALGEGAELGARGQSLPMGLL.

Topologically, residues 1 to 13 (MFGLFGLWRTFDS) are extracellular. A helical membrane pass occupies residues 14-34 (VVFYLTLIVGLGGPVGNGLVL). The Cytoplasmic segment spans residues 35–42 (WNLGFRIK). Residues 43-63 (KGPFSIYLLHLAAADFLFLSC) traverse the membrane as a helical segment. The Extracellular portion of the chain corresponds to 64–78 (RVGFSVAQAALGAQD). A helical membrane pass occupies residues 79 to 99 (TLYFVLTFLWFAVGLWLLAAF). Residues 100–120 (SVERCLSDLFPACYQGCRPRH) are Cytoplasmic-facing. A helical transmembrane segment spans residues 121–141 (ASAVLCALVWTPTLPAVPLPA). Residues 142–163 (NACGLLRNSACPLVCPRYHVAS) lie on the Extracellular side of the membrane. A helical transmembrane segment spans residues 164 to 184 (VTWFLVLARVAWTAGVVLFVW). Residues 185 to 195 (VTCCSTRPRPR) are Cytoplasmic-facing. Residues 196–216 (LYGIVLGALLLLFFCGLPSVF) traverse the membrane as a helical segment. Topologically, residues 217–221 (YWSLQ) are extracellular. A helical membrane pass occupies residues 222–242 (PLLNFLLPVFSPLATLLACVN). Residues 243–289 (SSSKPLIYSGLGRQPGKREPLRSVLRRALGEGAELGARGQSLPMGLL) lie on the Cytoplasmic side of the membrane.

Belongs to the G-protein coupled receptor 1 family. Mas subfamily.

The protein localises to the cell membrane. Orphan receptor. May regulate nociceptor function and/or development, including the sensation or modulation of pain. This is Mas-related G-protein coupled receptor member G (MRGPRG) from Homo sapiens (Human).